A 291-amino-acid chain; its full sequence is Gamma-sarcoglycan (291 aa).

The helical; Signal-anchor for type II membrane protein transmembrane segment at 38–58 (LFVLLLLIILLVNFALTIWIL) threads the bilayer. The Extracellular portion of the chain corresponds to 59–291 (KVMWFSPTGM…TCHEHSHICL (233 aa)). An N-linked (GlcNAc...) asparagine glycan is attached at N110. Disulfide bonds link C265/C290 and C267/C283.

Belongs to the sarcoglycan beta/delta/gamma/zeta family. Interacts with the syntrophin SNTA1. Cross-link to form 2 major subcomplexes: one consisting of SGCB, SGCD and SGCG and the other consisting of SGCB and SGCD. The association between SGCB and SGCG is particularly strong while SGCA is loosely associated with the other sarcoglycans. Interacts with FLNC. Disulfide bonds are present.

The protein resides in the cell membrane. The protein localises to the sarcolemma. It localises to the cytoplasm. It is found in the cytoskeleton. In terms of biological role, component of the sarcoglycan complex, a subcomplex of the dystrophin-glycoprotein complex which forms a link between the F-actin cytoskeleton and the extracellular matrix. This Canis lupus familiaris (Dog) protein is Gamma-sarcoglycan (SGCG).